Consider the following 237-residue polypeptide: Uridylate kinase (237 aa).

An ATP-binding site is contributed by 11-14; it reads KLSG. Gly53 lines the UMP pocket. Residues Gly54 and Arg58 each contribute to the ATP site. UMP contacts are provided by residues Asp73 and 134-141; that span reads TGNPFFTT. ATP-binding residues include Thr161, Tyr167, and Asp170.

This sequence belongs to the UMP kinase family. Homohexamer.

The protein localises to the cytoplasm. The catalysed reaction is UMP + ATP = UDP + ADP. It functions in the pathway pyrimidine metabolism; CTP biosynthesis via de novo pathway; UDP from UMP (UMPK route): step 1/1. Its activity is regulated as follows. Inhibited by UTP. Catalyzes the reversible phosphorylation of UMP to UDP. The polypeptide is Uridylate kinase (Nitrosomonas eutropha (strain DSM 101675 / C91 / Nm57)).